A 459-amino-acid chain; its full sequence is Phosphoglucosamine mutase (459 aa).

Ser112 functions as the Phosphoserine intermediate in the catalytic mechanism. The Mg(2+) site is built by Ser112, Asp249, Asp251, and Asp253. Position 112 is a phosphoserine (Ser112).

This sequence belongs to the phosphohexose mutase family. Requires Mg(2+) as cofactor. Activated by phosphorylation.

The catalysed reaction is alpha-D-glucosamine 1-phosphate = D-glucosamine 6-phosphate. Catalyzes the conversion of glucosamine-6-phosphate to glucosamine-1-phosphate. The chain is Phosphoglucosamine mutase from Synechococcus sp. (strain RCC307).